Here is a 391-residue protein sequence, read N- to C-terminus: Phosphoglycerate kinase (391 aa).

Substrate-binding positions include Asp21–Asn23, Arg36, His59–Arg62, Arg113, and Arg146. ATP is bound by residues Lys197, Glu319, and Gly345–Thr348.

The protein belongs to the phosphoglycerate kinase family. Monomer.

It is found in the cytoplasm. It catalyses the reaction (2R)-3-phosphoglycerate + ATP = (2R)-3-phospho-glyceroyl phosphate + ADP. Its pathway is carbohydrate degradation; glycolysis; pyruvate from D-glyceraldehyde 3-phosphate: step 2/5. The polypeptide is Phosphoglycerate kinase (Xanthomonas euvesicatoria pv. vesicatoria (strain 85-10) (Xanthomonas campestris pv. vesicatoria)).